Consider the following 65-residue polypeptide: MAKKGTRVVVTLECTECRTVPPSEKRSPGVSRYTTEKNRRNTTERLELKKFCPQLNKMTIHKEIK.

The disordered stretch occupies residues 20–40; sequence VPPSEKRSPGVSRYTTEKNRR.

Belongs to the bacterial ribosomal protein bL33 family.

This chain is Large ribosomal subunit protein bL33, found in Prochlorococcus marinus (strain MIT 9211).